Consider the following 431-residue polypeptide: Putative serine/threonine-protein kinase A (431 aa).

Positions 20–279 constitute a Protein kinase domain; that stretch reads YLNKGIVGLG…VREIFQIPYI (260 aa). Residues 26–34 and lysine 49 contribute to the ATP site; that span reads VGLGSYGEA. Aspartate 147 functions as the Proton acceptor in the catalytic mechanism. The region spanning 331–429 is the PH domain; that stretch reads DVTHRGHVNK…WVHAIQRGIG (99 aa).

Belongs to the protein kinase superfamily. Ser/Thr protein kinase family.

The enzyme catalyses L-seryl-[protein] + ATP = O-phospho-L-seryl-[protein] + ADP + H(+). It carries out the reaction L-threonyl-[protein] + ATP = O-phospho-L-threonyl-[protein] + ADP + H(+). This is Putative serine/threonine-protein kinase A (NRKA) from Trypanosoma brucei brucei.